A 223-amino-acid chain; its full sequence is NADH-quinone oxidoreductase subunit C (223 aa).

This sequence belongs to the complex I 30 kDa subunit family. NDH-1 is composed of 14 different subunits. Subunits NuoB, C, D, E, F, and G constitute the peripheral sector of the complex.

The protein resides in the cell inner membrane. It carries out the reaction a quinone + NADH + 5 H(+)(in) = a quinol + NAD(+) + 4 H(+)(out). Functionally, NDH-1 shuttles electrons from NADH, via FMN and iron-sulfur (Fe-S) centers, to quinones in the respiratory chain. The immediate electron acceptor for the enzyme in this species is believed to be ubiquinone. Couples the redox reaction to proton translocation (for every two electrons transferred, four hydrogen ions are translocated across the cytoplasmic membrane), and thus conserves the redox energy in a proton gradient. The sequence is that of NADH-quinone oxidoreductase subunit C from Hydrogenovibrio crunogenus (strain DSM 25203 / XCL-2) (Thiomicrospira crunogena).